The sequence spans 117 residues: Ig heavy chain V region 1-72 (117 aa).

The first 19 residues, 1–19 (MGWSCIMLFLAATATGVHS), serve as a signal peptide directing secretion. The segment at 20-49 (QVQLQQPGAELVKPGASVKLSCKASGYTFT) is framework-1. A disulfide bond links Cys41 and Cys115. A complementarity-determining-1 region spans residues 50–54 (SYWMH). The framework-2 stretch occupies residues 55-68 (WVKQRPGRGLEWIG). Positions 69–85 (RIDPNSGGTKYNEKFKS) are complementarity-determining-2. The framework-3 stretch occupies residues 86–117 (KATLTVDKPSSTAYMQLSSLTSEDSAVYYCAR).

This is Ig heavy chain V region 1-72 from Mus musculus (Mouse).